Here is a 337-residue protein sequence, read N- to C-terminus: Beta-hexosaminidase (337 aa).

Substrate contacts are provided by residues Asp62, Arg70, Arg133, and 163 to 164; that span reads KH. His176 serves as the catalytic Proton donor/acceptor. Asp248 (nucleophile) is an active-site residue.

Belongs to the glycosyl hydrolase 3 family. NagZ subfamily.

It localises to the cytoplasm. The catalysed reaction is Hydrolysis of terminal non-reducing N-acetyl-D-hexosamine residues in N-acetyl-beta-D-hexosaminides.. It functions in the pathway cell wall biogenesis; peptidoglycan recycling. Plays a role in peptidoglycan recycling by cleaving the terminal beta-1,4-linked N-acetylglucosamine (GlcNAc) from peptide-linked peptidoglycan fragments, giving rise to free GlcNAc, anhydro-N-acetylmuramic acid and anhydro-N-acetylmuramic acid-linked peptides. This Psychromonas ingrahamii (strain DSM 17664 / CCUG 51855 / 37) protein is Beta-hexosaminidase.